The following is a 149-amino-acid chain: Urease accessory protein UreE (149 aa).

The protein belongs to the UreE family.

Its subcellular location is the cytoplasm. Its function is as follows. Involved in urease metallocenter assembly. Binds nickel. Probably functions as a nickel donor during metallocenter assembly. This chain is Urease accessory protein UreE, found in Prochlorococcus marinus (strain AS9601).